The chain runs to 598 residues: EF-hand and coiled-coil domain-containing protein 1 (598 aa).

The interval 1–22 (MEPVSTGAEAGMEGAGGDPYRR) is disordered. The EF-hand domain occupies 54 to 89 (GLDQYLQEVFHHLDCRGAGRLPRADFRALCAVLGLR). 3 disordered regions span residues 96–127 (AGQAAGDGNSRDVTPGDAAAELATDGDSDTDE), 175–198 (RLRRPRRRRRPPCAPGPDSGPDCE), and 326–411 (YRSE…KKTP). Positions 175–185 (RLRRPRRRRRP) are enriched in basic residues. Residues 196–303 (DCERVARLEE…RSLHRVRELE (108 aa)) adopt a coiled-coil conformation. Positions 343–359 (PGDKSNEPEDAGTRDPD) are enriched in basic and acidic residues. Acidic residues predominate over residues 394–404 (SDEEEVEEERW). Residues 479–533 (TSEEEAELQQKVEENEHLRLELQMVETERVRLSLLEEKLVDVLQLLQRLRDLNIS) are a coiled coil.

In Homo sapiens (Human), this protein is EF-hand and coiled-coil domain-containing protein 1 (EFCC1).